The sequence spans 425 residues: tRNA(Ile)-lysidine synthase (425 aa).

Residue 27–32 participates in ATP binding; it reads SGGLDS.

Belongs to the tRNA(Ile)-lysidine synthase family.

It localises to the cytoplasm. The enzyme catalyses cytidine(34) in tRNA(Ile2) + L-lysine + ATP = lysidine(34) in tRNA(Ile2) + AMP + diphosphate + H(+). Its function is as follows. Ligates lysine onto the cytidine present at position 34 of the AUA codon-specific tRNA(Ile) that contains the anticodon CAU, in an ATP-dependent manner. Cytidine is converted to lysidine, thus changing the amino acid specificity of the tRNA from methionine to isoleucine. In Streptococcus pneumoniae (strain Taiwan19F-14), this protein is tRNA(Ile)-lysidine synthase.